The primary structure comprises 505 residues: Actin nucleation-promoting factor WASL (505 aa).

An N-acetylserine modification is found at Ser2. The WH1 domain occupies 34–141; the sequence is LGKKCVTMSS…KAVTDLLGRR (108 aa). Disordered stretches follow at residues 138–163 and 184–205; these read LGRR…ATVD and HTKE…DIGT. A compositionally biased stretch (basic residues) spans 186–198; that stretch reads KEKKKGKAKKKRL. The CRIB domain maps to 203–216; it reads IGTPSNFQHIGHVG. The residue at position 242 (Ser242) is a Phosphoserine; by TNK2. The residue at position 256 (Tyr256) is a Phosphotyrosine; by FAK1 and TNK2. The segment at 266 to 406 is disordered; the sequence is EAVKNELRRQ…HQVPTTAGNK (141 aa). Pro residues-rich tracts occupy residues 276 to 364 and 371 to 391; these read APPP…PPPS and VAPP…PPGL. Arg307 bears the Omega-N-methylarginine mark. WH2 domains are found at residues 405–422 and 433–450; these read NKAA…LKKV and GRDA…LKSV. The tract at residues 476 to 505 is disordered; that stretch reads QKRSKAIHSSDEDEDEDDEEDFEDDDEWED. Phosphoserine occurs at positions 484 and 485. The segment covering 486–505 has biased composition (acidic residues); that stretch reads DEDEDEDDEEDFEDDDEWED.

In terms of assembly, binds actin and the Arp2/3 complex. Interacts with CDC42. Interacts with FCHSD1. Interacts with FCHSD2. Binds to SH3 domains of GRB2. Interacts with the C-terminal SH3 domain of DNMBP. Interacts with SNX9. Interacts with the WW domains of PRPF40A/FBP11. Interacts with PTK2/FAK1. Interacts with PACSIN1, PACSIN2 and PACSIN3. Interacts with NOSTRIN. Binds to TNK2. Interacts with SNX33. Interacts with NONO (via second RRM domain); the interaction is direct. Component of a multiprotein complex with NONO and SFPQ; associates with the complex via direct interaction with NONO. As to quaternary structure, (Microbial infection) Interacts with E.coli effector protein EspF(U). Identified in a complex containing at least WASL, BAIAP2L1 and E.coli EspF(U). (Microbial infection) Interacts with Shigella flexneri protein IcsA. The interaction with IcsA enhances the affinity of WASL for Arp2/3, thus assembling a tight complex which has maximal activity in actin assembly. In terms of processing, phosphorylation at Ser-242, Tyr-256, Ser-484 and Ser-485 enhances actin polymerization activity.

Its subcellular location is the cytoplasm. The protein resides in the cytoskeleton. The protein localises to the nucleus. In terms of biological role, regulates actin polymerization by stimulating the actin-nucleating activity of the Arp2/3 complex. Involved in various processes, such as mitosis and cytokinesis, via its role in the regulation of actin polymerization. Together with CDC42, involved in the extension and maintenance of the formation of thin, actin-rich surface projections called filopodia. In addition to its role in the cytoplasm, also plays a role in the nucleus by regulating gene transcription, probably by promoting nuclear actin polymerization. Binds to HSF1/HSTF1 and forms a complex on heat shock promoter elements (HSE) that negatively regulates HSP90 expression. Plays a role in dendrite spine morphogenesis. Decreasing levels of DNMBP (using antisense RNA) alters apical junction morphology in cultured enterocytes, junctions curve instead of being nearly linear. This Homo sapiens (Human) protein is Actin nucleation-promoting factor WASL (WASL).